A 227-amino-acid chain; its full sequence is NAD(P)H-quinone oxidoreductase subunit K, chloroplastic (227 aa).

[4Fe-4S] cluster contacts are provided by Cys43, Cys44, Cys108, and Cys139.

The protein belongs to the complex I 20 kDa subunit family. In terms of assembly, NDH is composed of at least 16 different subunits, 5 of which are encoded in the nucleus. The cofactor is [4Fe-4S] cluster.

The protein resides in the plastid. It localises to the chloroplast thylakoid membrane. It catalyses the reaction a plastoquinone + NADH + (n+1) H(+)(in) = a plastoquinol + NAD(+) + n H(+)(out). It carries out the reaction a plastoquinone + NADPH + (n+1) H(+)(in) = a plastoquinol + NADP(+) + n H(+)(out). In terms of biological role, NDH shuttles electrons from NAD(P)H:plastoquinone, via FMN and iron-sulfur (Fe-S) centers, to quinones in the photosynthetic chain and possibly in a chloroplast respiratory chain. The immediate electron acceptor for the enzyme in this species is believed to be plastoquinone. Couples the redox reaction to proton translocation, and thus conserves the redox energy in a proton gradient. The chain is NAD(P)H-quinone oxidoreductase subunit K, chloroplastic from Spinacia oleracea (Spinach).